The primary structure comprises 471 residues: Protein naked cuticle homolog 1 (471 aa).

2 disordered regions span residues 1-23 (MGKL…GDSF) and 41-82 (QRCP…DEDD). The N-myristoyl glycine moiety is linked to residue Gly-2. Over residues 62-75 (GTRELVGDTSREAL) the composition is skewed to basic and acidic residues. Residues 125–190 (QCDVSVEEDS…LRVKLTVAPD (66 aa)) form an interaction with DVL1, DVL2 and DVL3 region. Residues 131 to 166 (EEDSRQEWTFTLYDFDNNGKVTREDITSLLHTIYEV) enclose the EF-hand domain. Ca(2+) is bound by residues Asp-144, Asp-146, Asn-148, Lys-150, and Asp-155. 3 disordered regions span residues 273-314 (GPGS…QGVD), 337-382 (GTQD…SPSA), and 448-471 (QAVQ…FYQP). Basic residues predominate over residues 453-471 (HEHHHHHEHHHHYHHFYQP).

This sequence belongs to the NKD family. As to quaternary structure, interacts with DVL1, DVL2, DVL3 and PPP2R3A. As to expression, highly expressed in lung. Also expressed in brain, heart, kidney, liver, skin, stomach and testis. Within the testis expression is found in the seminiferous epithelium and round and elongating spermatids.

It localises to the cell membrane. Its subcellular location is the cytoplasm. Functionally, cell autonomous antagonist of the canonical Wnt signaling pathway. May activate a second Wnt signaling pathway that controls planar cell polarity. Required for spermatogenesis. In Mus musculus (Mouse), this protein is Protein naked cuticle homolog 1 (Nkd1).